The primary structure comprises 311 residues: Progestin and adipoQ receptor family member 3 (311 aa).

The interval 1 to 20 (MHQKLLKSAHYIELGSYQYW) is required for interaction with SREBF2. At 1-73 (MHQKLLKSAH…FILSNETVNI (73 aa)) the chain is on the cytoplasmic side. Positions 41–60 (KDNPYITDGYRAYLPSRLCI) are required for interaction with SCAP. Residues 61–71 (KSLFILSNETV) form a golgi targeting region. Residues 74-96 (WSHLLGFFLFFTLGIYDMTSVLP) traverse the membrane as a helical segment. At 97 to 105 (SASASREDF) the chain is on the lumenal side. Residues 106–128 (VICSICLFCFQVCMLCSVGYHLF) traverse the membrane as a helical segment. Topologically, residues 129–140 (SCHRSEKTCRRW) are cytoplasmic. A helical membrane pass occupies residues 141–163 (MALDYAGISIGILGCYVSGVFYA). The Lumenal segment spans residues 164–172 (FYCNNYWRQ). The chain crosses the membrane as a helical span at residues 173–195 (VYLITVLAMILAVFFAQIHPNYL). Residues 196–201 (TQQWQR) are Cytoplasmic-facing. The chain crosses the membrane as a helical span at residues 202–224 (LRSIIFCSVSGYGVIPTLHWVWL). Topologically, residues 225–238 (NGGIGAPIVQDFAP) are lumenal. A helical membrane pass occupies residues 239 to 256 (RVIVMYMIALLAFLFYIS). The Cytoplasmic portion of the chain corresponds to 257–275 (KVPERYFPGQLNYLGSSHQ). Residues 276–298 (IWHILAVVMLYWWHQSTVYVMQY) traverse the membrane as a helical segment. The interval 299-303 (RHSKP) is golgi targeting. The Lumenal portion of the chain corresponds to 299 to 311 (RHSKPCPDYVSHL).

Belongs to the ADIPOR family. Interacts with SCAP and SREBF2; the interactions are direct, increase in low cholesterol conditions and tether SCAP:SREBP complex to the Golgi apparatus. Interaction with SCAP is mutually exclusive with INSIG1. In hepatocytes, interacts with PPARA and HUWE1; the interactions promote PPARA poylubiquitination and HUWE1-mediated degradation. In macrophages, interacts with PPARG and STUB1; the interactions promote PPARG poylubiquitination and STUB1-mediated degradation. In terms of tissue distribution, widely expressed in a range of tissues.

The protein localises to the golgi apparatus membrane. Its function is as follows. Golgi-scaffold protein which modulates its interactors acitivies by anchoring them to the Golgi apparatus. Functions as a spatial regulator of RAF1 kinase by sequestrating it to the Golgi apparatus. Acts as a positive regulator of cholesterol biosynthesis by mediating the anchoring of the SCAP:SREBP complex in the Golgi apparatus, thereby promoting SCAP:SREBF2 complex formation, potentiating SREBF2 and SREBF1 processing and enhancing lipid synthesis. Also regulates PPARA and PPARG functions by mediating their interaction with E3 ubiquitin ligases, such as STUB1 or HUWE1, leading to their polyubiquitination and proteasome-mediated degradation. The protein is Progestin and adipoQ receptor family member 3 of Homo sapiens (Human).